Reading from the N-terminus, the 690-residue chain is UvrABC system protein C (690 aa).

The 80-residue stretch at 15 to 94 folds into the GIY-YIG domain; the sequence is TDPGVYTFRD…IKRFNPRFNV (80 aa). A UVR domain is found at 207–242; the sequence is EPVLRRVRKEMEQASENLDFERAASLRDQLQAMQKS.

The protein belongs to the UvrC family. In terms of assembly, interacts with UvrB in an incision complex.

Its subcellular location is the cytoplasm. The UvrABC repair system catalyzes the recognition and processing of DNA lesions. UvrC both incises the 5' and 3' sides of the lesion. The N-terminal half is responsible for the 3' incision and the C-terminal half is responsible for the 5' incision. The polypeptide is UvrABC system protein C (Corynebacterium jeikeium (strain K411)).